A 154-amino-acid chain; its full sequence is Large ribosomal subunit protein uL15 (154 aa).

The span at 1–13 (MKLHELKPAEGSR) shows a compositional bias: basic and acidic residues. A disordered region spans residues 1–52 (MKLHELKPAEGSRKNRKRVGRGPGGTDKTAGRGHKGQKSRSGAGKGSFFEGG).

It belongs to the universal ribosomal protein uL15 family. In terms of assembly, part of the 50S ribosomal subunit.

Its function is as follows. Binds to the 23S rRNA. This is Large ribosomal subunit protein uL15 from Deinococcus deserti (strain DSM 17065 / CIP 109153 / LMG 22923 / VCD115).